A 405-amino-acid chain; its full sequence is L-rhamnonate dehydratase (405 aa).

Residues histidine 33 and arginine 59 each contribute to the substrate site. 3 residues coordinate Mg(2+): aspartate 226, glutamate 252, and glutamate 280. Residue histidine 329 is the Proton acceptor of the active site. Residue glutamate 349 participates in substrate binding.

Belongs to the mandelate racemase/muconate lactonizing enzyme family. RhamD subfamily. As to quaternary structure, homooctamer; tetramer of dimers. Mg(2+) is required as a cofactor.

It catalyses the reaction L-rhamnonate = 2-dehydro-3-deoxy-L-rhamnonate + H2O. Functionally, catalyzes the dehydration of L-rhamnonate to 2-keto-3-deoxy-L-rhamnonate (KDR). The sequence is that of L-rhamnonate dehydratase from Salmonella paratyphi C (strain RKS4594).